A 355-amino-acid chain; its full sequence is F-box only protein 32 (355 aa).

A Nuclear localization signal motif is present at residues 62–67 (KKRKKD). A Nuclear export signal motif is present at residues 169–173 (LLQTL). The region spanning 223–271 (LTITDLPVCLQLNIMQRLSDGRDLVSLGQAAPDLHVLSEDRLLWKRLCQ) is the F-box domain. The Bipartite nuclear localization signal signature appears at 280-295 (RKRLILSDKGQLDWKK).

As to quaternary structure, part of the SCF (SKP1-CUL1-F-box) E3 ubiquitin-protein ligase complex SCF(FBXO32) formed of CUL1, SKP1, RBX1 and FBXO32. In terms of tissue distribution, specifically expressed in cardiac and skeletal muscle.

It is found in the cytoplasm. Its subcellular location is the nucleus. The protein operates within protein modification; protein ubiquitination. Functionally, substrate recognition component of a SCF (SKP1-CUL1-F-box protein) E3 ubiquitin-protein ligase complex which mediates the ubiquitination and subsequent proteasomal degradation of target proteins. Probably recognizes and binds to phosphorylated target proteins during skeletal muscle atrophy. Recognizes TERF1. This Mus musculus (Mouse) protein is F-box only protein 32 (Fbxo32).